The chain runs to 113 residues: Beta-defensin 112 (113 aa).

Intrachain disulfides connect Cys54–Cys82, Cys61–Cys75, and Cys65–Cys83.

Belongs to the beta-defensin family.

It localises to the secreted. Its function is as follows. Has antibacterial activity. The protein is Beta-defensin 112 (DEFB112) of Pan troglodytes (Chimpanzee).